We begin with the raw amino-acid sequence, 129 residues long: V-type proton ATPase subunit F 2 (129 aa).

Belongs to the V-ATPase F subunit family. V-ATPase is a heteromultimeric enzyme made up of two complexes: the ATP-hydrolytic V1 complex and the proton translocation V0 complex. The V1 complex consists of three catalytic AB heterodimers that form a heterohexamer, three peripheral stalks each consisting of EG heterodimers, one central rotor including subunits D and F, and the regulatory subunits C and H. The proton translocation complex V0 consists of the proton transport subunit a, a ring of proteolipid subunits c9c'', rotary subunit d, subunits e and f, and the accessory subunits VhaAC45 and ATP6AP2.

Functionally, subunit of the V1 complex of vacuolar(H+)-ATPase (V-ATPase), a multisubunit enzyme composed of a peripheral complex (V1) that hydrolyzes ATP and a membrane integral complex (V0) that translocates protons. V-ATPase is responsible for acidifying and maintaining the pH of intracellular compartments and in some cell types, is targeted to the plasma membrane, where it is responsible for acidifying the extracellular environment. In Drosophila melanogaster (Fruit fly), this protein is V-type proton ATPase subunit F 2 (Vha14-2).